The chain runs to 348 residues: 4-hydroxy-2-oxovalerate aldolase 2 (348 aa).

Positions 5–256 (LQICDSTLRD…EARIKLFDAL (252 aa)) constitute a Pyruvate carboxyltransferase domain. Substrate is bound at residue 13–14 (RD). D14 serves as a coordination point for Mn(2+). H17 serves as the catalytic Proton acceptor. Residues S168 and H195 each contribute to the substrate site. 2 residues coordinate Mn(2+): H195 and H197.

This sequence belongs to the 4-hydroxy-2-oxovalerate aldolase family.

The catalysed reaction is (S)-4-hydroxy-2-oxopentanoate = acetaldehyde + pyruvate. The protein is 4-hydroxy-2-oxovalerate aldolase 2 of Salinispora arenicola (strain CNS-205).